A 427-amino-acid chain; its full sequence is Large ribosomal subunit protein uL4 (427 aa).

Position 2 is an N-acetylalanine (alanine 2). N6-acetyllysine is present on lysine 14. Arginine 97 carries the omega-N-methylarginine modification. Lysine 106 bears the N6-acetyllysine mark. A Glycyl lysine isopeptide (Lys-Gly) (interchain with G-Cter in SUMO2) cross-link involves residue lysine 239. Position 259 is an N6-acetyllysine (lysine 259). Threonine 266 carries the phosphothreonine modification. Phosphoserine is present on residues serine 290 and serine 295. Arginine 300 carries the citrulline modification. Lysine 327 is covalently cross-linked (Glycyl lysine isopeptide (Lys-Gly) (interchain with G-Cter in SUMO2)). N6-acetyllysine is present on residues lysine 333 and lysine 353. Lysine 364 is subject to N6-acetyllysine; alternate. Lysine 364 is covalently cross-linked (Glycyl lysine isopeptide (Lys-Gly) (interchain with G-Cter in SUMO1); alternate). Serine 365 is subject to Phosphoserine. Residues 369–427 form a disordered region; that stretch reads AAVAGKKPVVGKKGKKAAVGVKKQKKPLVGKKAAATKKPAPEKKPAEKKPTTEEKKPAA. Over residues 377–397 the composition is skewed to basic residues; sequence VVGKKGKKAAVGVKKQKKPLV. Residues 407 to 427 are compositionally biased toward basic and acidic residues; that stretch reads PAPEKKPAEKKPTTEEKKPAA.

It belongs to the universal ribosomal protein uL4 family. As to quaternary structure, component of the large ribosomal subunit. May bind IPO9 with low affinity. Interacts with RBM3. Citrullinated by PADI4.

It is found in the cytoplasm. Its function is as follows. Component of the large ribosomal subunit. The ribosome is a large ribonucleoprotein complex responsible for the synthesis of proteins in the cell. In Homo sapiens (Human), this protein is Large ribosomal subunit protein uL4 (RPL4).